A 100-amino-acid chain; its full sequence is UPF0213 protein YhbQ (100 aa).

A GIY-YIG domain is found at 2-77 (TPWFLYLIRT…KQLTKRQKER (76 aa)).

The protein belongs to the UPF0213 family.

The protein is UPF0213 protein YhbQ of Escherichia coli O7:K1 (strain IAI39 / ExPEC).